Consider the following 169-residue polypeptide: Lipoprotein signal peptidase (169 aa).

Transmembrane regions (helical) follow at residues 4-24, 42-62, 70-90, and 102-122; these read PICS…IVDL, LIPF…SFLA, WFFA…MYRS, and ALII…GAVI. Residues aspartate 123 and aspartate 141 contribute to the active site. A helical membrane pass occupies residues 137–157; that stretch reads FNIADTAICIGAALVIFEGFI.

This sequence belongs to the peptidase A8 family.

It localises to the cell inner membrane. The enzyme catalyses Release of signal peptides from bacterial membrane prolipoproteins. Hydrolyzes -Xaa-Yaa-Zaa-|-(S,diacylglyceryl)Cys-, in which Xaa is hydrophobic (preferably Leu), and Yaa (Ala or Ser) and Zaa (Gly or Ala) have small, neutral side chains.. Its pathway is protein modification; lipoprotein biosynthesis (signal peptide cleavage). Functionally, this protein specifically catalyzes the removal of signal peptides from prolipoproteins. This Yersinia enterocolitica serotype O:8 / biotype 1B (strain NCTC 13174 / 8081) protein is Lipoprotein signal peptidase.